The primary structure comprises 29 residues: Ranatuerin-2SEa (29 aa).

A disulfide bond links C23 and C29.

Expressed by the skin glands.

The protein localises to the secreted. Its function is as follows. Mast cell degranulating peptide. Causes histamine release from rat peritoneal mast cells in vitro. Has antibacterial activity against the Gram-negative bacterium E.coli K12 and Gram-positive bacterium M.luteus NCT C2665. In Lithobates sevosus (Dusky gopher frog), this protein is Ranatuerin-2SEa.